Consider the following 104-residue polypeptide: ATP-dependent Clp protease adapter protein ClpS (104 aa).

Belongs to the ClpS family. In terms of assembly, binds to the N-terminal domain of the chaperone ClpA.

In terms of biological role, involved in the modulation of the specificity of the ClpAP-mediated ATP-dependent protein degradation. The protein is ATP-dependent Clp protease adapter protein ClpS of Oleidesulfovibrio alaskensis (strain ATCC BAA-1058 / DSM 17464 / G20) (Desulfovibrio alaskensis).